Consider the following 184-residue polypeptide: dITP/XTP pyrophosphatase (184 aa).

5-10 lines the substrate pocket; that stretch reads SSNRHK. Residues Glu-33 and Asp-62 each contribute to the Mg(2+) site. Asp-62 acts as the Proton acceptor in catalysis. Substrate-binding positions include Ser-63, 136–139, Lys-158, and 163–164; these read WGFD and HR.

It belongs to the HAM1 NTPase family. In terms of assembly, homodimer. Mg(2+) serves as cofactor.

It carries out the reaction XTP + H2O = XMP + diphosphate + H(+). It catalyses the reaction dITP + H2O = dIMP + diphosphate + H(+). The enzyme catalyses ITP + H2O = IMP + diphosphate + H(+). Pyrophosphatase that catalyzes the hydrolysis of nucleoside triphosphates to their monophosphate derivatives, with a high preference for the non-canonical purine nucleotides XTP (xanthosine triphosphate), dITP (deoxyinosine triphosphate) and ITP. Seems to function as a house-cleaning enzyme that removes non-canonical purine nucleotides from the nucleotide pool, thus preventing their incorporation into DNA/RNA and avoiding chromosomal lesions. This is dITP/XTP pyrophosphatase from Korarchaeum cryptofilum (strain OPF8).